A 347-amino-acid chain; its full sequence is Molybdenum cofactor biosynthesis bifunctional protein (347 aa).

A molybdenum cofactor biosynthesis protein C region spans residues M1–S158. Substrate-binding positions include F75–H77 and M116–E117. Residue D131 is the For MoaC activity of the active site. The segment at Q159–N347 is molybdenum cofactor guanylyltransferase. GTP is bound by residues L167–G169, K179, D226, and D255. A Mg(2+)-binding site is contributed by D255.

In the N-terminal section; belongs to the MoaC family. The protein in the C-terminal section; belongs to the MobA family. It depends on Mg(2+) as a cofactor.

Its subcellular location is the cytoplasm. It carries out the reaction Mo-molybdopterin + GTP + H(+) = Mo-molybdopterin guanine dinucleotide + diphosphate. The catalysed reaction is (8S)-3',8-cyclo-7,8-dihydroguanosine 5'-triphosphate = cyclic pyranopterin phosphate + diphosphate. It functions in the pathway cofactor biosynthesis; molybdopterin biosynthesis. Catalyzes the conversion of (8S)-3',8-cyclo-7,8-dihydroguanosine 5'-triphosphate to cyclic pyranopterin monophosphate (cPMP). In terms of biological role, transfers a GMP moiety from GTP to Mo-molybdopterin (Mo-MPT) cofactor (Moco or molybdenum cofactor) to form Mo-molybdopterin guanine dinucleotide (Mo-MGD) cofactor. This Synechocystis sp. (strain ATCC 27184 / PCC 6803 / Kazusa) protein is Molybdenum cofactor biosynthesis bifunctional protein (moaC/mobA).